The chain runs to 203 residues: GTP-binding protein rho4 (203 aa).

A GTP-binding site is contributed by 21–28; sequence GDGGCGKT. Positions 43–51 match the Effector region motif; sequence YVPTVFENY. Residue 70 to 74 participates in GTP binding; it reads DTAGQ. Cysteine methyl ester is present on Cys200. Cys200 carries S-geranylgeranyl cysteine lipidation. Residues 201–203 constitute a propeptide, removed in mature form; sequence VIL.

The protein belongs to the small GTPase superfamily. Rho family.

Its subcellular location is the membrane. Required for cell separation. Involved in the regulation of the septum degradation during cytokinesis and in the organization of F-actin patches and cytoplasmic microtubules. The polypeptide is GTP-binding protein rho4 (rho4) (Schizosaccharomyces pombe (strain 972 / ATCC 24843) (Fission yeast)).